Consider the following 350-residue polypeptide: Histidinol-phosphate aminotransferase (350 aa).

The residue at position 209 (Lys-209) is an N6-(pyridoxal phosphate)lysine.

It belongs to the class-II pyridoxal-phosphate-dependent aminotransferase family. Histidinol-phosphate aminotransferase subfamily. Homodimer. The cofactor is pyridoxal 5'-phosphate.

It catalyses the reaction L-histidinol phosphate + 2-oxoglutarate = 3-(imidazol-4-yl)-2-oxopropyl phosphate + L-glutamate. It functions in the pathway amino-acid biosynthesis; L-histidine biosynthesis; L-histidine from 5-phospho-alpha-D-ribose 1-diphosphate: step 7/9. This chain is Histidinol-phosphate aminotransferase, found in Christiangramia forsetii (strain DSM 17595 / CGMCC 1.15422 / KT0803) (Gramella forsetii).